We begin with the raw amino-acid sequence, 453 residues long: Na(+)/H(+) antiporter NhaA 2 (453 aa).

Transmembrane regions (helical) follow at residues 23–43 (FLHI…AALI), 74–94 (LHFW…GMEI), 111–131 (LPMA…LSFG), 139–159 (GWAV…ALLG), 168–188 (VFLL…IAFF), 191–211 (GGLD…VIGL), 214–234 (IGVG…LGIL), 235–255 (LTGA…PVTA), 316–336 (VAFG…LSGV), 345–365 (WVMI…IVSV), 386–406 (IMLV…IANL), and 419–439 (LGVL…GVWS).

Belongs to the NhaA Na(+)/H(+) (TC 2.A.33) antiporter family.

The protein localises to the cell inner membrane. It carries out the reaction Na(+)(in) + 2 H(+)(out) = Na(+)(out) + 2 H(+)(in). Its function is as follows. Na(+)/H(+) antiporter that extrudes sodium in exchange for external protons. The sequence is that of Na(+)/H(+) antiporter NhaA 2 from Pseudomonas putida (strain ATCC 47054 / DSM 6125 / CFBP 8728 / NCIMB 11950 / KT2440).